The chain runs to 66 residues: Large ribosomal subunit protein bL33c (66 aa).

The protein belongs to the bacterial ribosomal protein bL33 family.

It localises to the plastid. The protein localises to the chloroplast. This chain is Large ribosomal subunit protein bL33c, found in Ceratophyllum demersum (Rigid hornwort).